The chain runs to 32 residues: MSDIN-like toxin proprotein 1 (32 aa).

A propeptide spanning residues 1–10 is cleaved from the precursor; that stretch reads MSDINATRLP. A cross-link (cyclopeptide (Ile-Pro)) is located at residues 11–18; sequence IFWFIYFP. A propeptide spanning residues 19–32 is cleaved from the precursor; sequence CVSDVDSTLTRGER.

This sequence belongs to the MSDIN fungal toxin family. Post-translationally, processed by the macrocyclase-peptidase enzyme POPB to yield a toxic cyclic octapeptide. POPB first removes 10 residues from the N-terminus. Conformational trapping of the remaining peptide forces the enzyme to release this intermediate rather than proceed to macrocyclization. The enzyme rebinds the remaining peptide in a different conformation and catalyzes macrocyclization of the N-terminal 8 residues. In terms of tissue distribution, expressed in basidiocarps.

Its function is as follows. Probable toxin that belongs to the MSDIN-like toxin family responsible for a large number of food poisoning cases and deaths. This chain is MSDIN-like toxin proprotein 1, found in Amanita exitialis (Guangzhou destroying angel).